The sequence spans 317 residues: Olfactory receptor-like protein OLF3 (317 aa).

Residues 1 to 25 (MGTGNQTWVREFVLLGLSSDWDTEV) lie on the Extracellular side of the membrane. N-linked (GlcNAc...) asparagine glycosylation is present at Asn5. Residues 26-49 (SLFVLFLITYMVTVLGNFLIILLI) traverse the membrane as a helical segment. The Cytoplasmic portion of the chain corresponds to 50-57 (RLDSRLHT). A helical membrane pass occupies residues 58-79 (PMYFFLTNLSLVDVSYATSIIP). At 80–100 (QMLAHLLAAHKAIPFVSCAAQ) the chain is on the extracellular side. A helical membrane pass occupies residues 101–120 (LFFSLGLGGIEFVLLAVMAY). Residues 121–139 (DRYVAVCDPLRYSVIMHGG) lie on the Cytoplasmic side of the membrane. Residues 140-158 (LCTRLAITSWVSGSMNSLM) form a helical membrane-spanning segment. Residues 159 to 196 (QTVITFQLPMCTNKYIDHISCELLAVVRLACVDTSSNE) are Extracellular-facing. The helical transmembrane segment at 197 to 219 (IAIMVSSIVLLMTPFCLVLLSYI) threads the bilayer. The Cytoplasmic segment spans residues 220-236 (QIISTILKIQSTEGRKK). Residues 237–260 (AFHTCASHLTVVVLCYGMAIFTYI) traverse the membrane as a helical segment. Residues 261-272 (QPRSSPSVLQEK) are Extracellular-facing. Residues 273 to 292 (LISLFYSVLTPMLNPMIYSV) traverse the membrane as a helical segment. The Cytoplasmic segment spans residues 293 to 317 (RNKEVKGAWQKLLGQLTGITSKLAT).

It belongs to the G-protein coupled receptor 1 family.

The protein resides in the cell membrane. Its function is as follows. Putative odorant or sperm cell receptor. The polypeptide is Olfactory receptor-like protein OLF3 (Canis lupus familiaris (Dog)).